The sequence spans 127 residues: Ribonuclease P protein component (127 aa).

The protein belongs to the RnpA family. As to quaternary structure, consists of a catalytic RNA component (M1 or rnpB) and a protein subunit.

It carries out the reaction Endonucleolytic cleavage of RNA, removing 5'-extranucleotides from tRNA precursor.. In terms of biological role, RNaseP catalyzes the removal of the 5'-leader sequence from pre-tRNA to produce the mature 5'-terminus. It can also cleave other RNA substrates such as 4.5S RNA. The protein component plays an auxiliary but essential role in vivo by binding to the 5'-leader sequence and broadening the substrate specificity of the ribozyme. In Prochlorococcus marinus (strain SARG / CCMP1375 / SS120), this protein is Ribonuclease P protein component.